A 296-amino-acid chain; its full sequence is Ribosomal protein L11 methyltransferase (296 aa).

S-adenosyl-L-methionine-binding residues include Thr-151, Gly-172, Asp-194, and Asn-233.

This sequence belongs to the methyltransferase superfamily. PrmA family.

It localises to the cytoplasm. It catalyses the reaction L-lysyl-[protein] + 3 S-adenosyl-L-methionine = N(6),N(6),N(6)-trimethyl-L-lysyl-[protein] + 3 S-adenosyl-L-homocysteine + 3 H(+). Methylates ribosomal protein L11. The sequence is that of Ribosomal protein L11 methyltransferase from Thiobacillus denitrificans (strain ATCC 25259 / T1).